Consider the following 390-residue polypeptide: uncharacterized protein (390 aa).

A Glutaredoxin domain is found at S215–E325.

This is an uncharacterized protein from Arabidopsis thaliana (Mouse-ear cress).